The chain runs to 209 residues: Uridine kinase (209 aa).

Residue 12–19 (GGSGSGKT) participates in ATP binding.

This sequence belongs to the uridine kinase family.

It localises to the cytoplasm. It catalyses the reaction uridine + ATP = UMP + ADP + H(+). The enzyme catalyses cytidine + ATP = CMP + ADP + H(+). The protein operates within pyrimidine metabolism; CTP biosynthesis via salvage pathway; CTP from cytidine: step 1/3. Its pathway is pyrimidine metabolism; UMP biosynthesis via salvage pathway; UMP from uridine: step 1/1. This is Uridine kinase from Listeria monocytogenes serotype 4b (strain CLIP80459).